Consider the following 321-residue polypeptide: uncharacterized protein (321 aa).

The protein belongs to the NAD(P)-dependent epimerase/dehydratase family.

This is an uncharacterized protein from Staphylococcus aureus (strain bovine RF122 / ET3-1).